The chain runs to 290 residues: Taxis protein CheF1 (290 aa).

Interacts with chemotaxis (Che) proteins as well as flagella accessory (Fla) proteins.

Involved in taxis signal transduction. Essential for the ability to control the direction of flagellar rotation. May have a role between CheY and the flagellum. The protein is Taxis protein CheF1 (cheF1) of Halobacterium salinarum (strain ATCC 29341 / DSM 671 / R1).